Here is a 300-residue protein sequence, read N- to C-terminus: F-box/LRR-repeat protein 15 (300 aa).

N-acetylmethionine is present on Met-1. The F-box domain occupies 19–66 (LLDLPWEDVLLPHVLNWVPLRQLLRLQRVSRAFRALVQLHLARLRRFD). The tract at residues 113–269 (NPQLRSVALA…EPSLSRLRKR (157 aa)) is interaction with SMURF1. 5 LRR repeats span residues 141–162 (RLQR…RGLA), 167–188 (ALEE…VYLA), 194–215 (GLRS…QELA), 220–241 (QLEH…RTLA), and 246–267 (ALRS…SRLR).

This sequence belongs to the FBXL15 family. As to quaternary structure, part of the SCF (SKP1-CUL1-F-box) E3 ubiquitin-protein ligase complex SCF(FBXL15) composed of CUL1, SKP1, RBX1 and FBXL15. In terms of tissue distribution, expressed in heart, liver, spleen, bone, muscle, brain and kidney (at protein level).

Its subcellular location is the cytoplasm. It functions in the pathway protein modification; protein ubiquitination. Substrate recognition component of a SCF (SKP1-CUL1-F-box protein) E3 ubiquitin-protein ligase complex which mediates the ubiquitination and subsequent proteasomal degradation of SMURF1, thereby acting as a positive regulator of the BMP signaling pathway. Required for dorsal/ventral pattern formation and bone mass maintenance. Also mediates ubiquitination of SMURF2 and WWP2. This is F-box/LRR-repeat protein 15 (Fbxl15) from Mus musculus (Mouse).